A 424-amino-acid polypeptide reads, in one-letter code: Neurotensin receptor type 1 (424 aa).

At 1–67 (MHLNSSVQQG…TDIYSKVLVT (67 aa)) the chain is on the extracellular side. N-linked (GlcNAc...) asparagine glycans are attached at residues asparagine 4, asparagine 38, and asparagine 42. The chain crosses the membrane as a helical span at residues 68-88 (AVYLALFVVGTVGNSVTAFTL). The Cytoplasmic portion of the chain corresponds to 89-102 (ARKKSLQSLQSTVH). A helical membrane pass occupies residues 103-122 (YHLGSLALSDLLILLLAMPV). The Extracellular segment spans residues 123–142 (ELYNFIWVHHPWAFGDAGCR). Cysteine 141 and cysteine 224 are oxidised to a cystine. Residues 143 to 164 (GYYFLRDACTYATALNVASLSV) traverse the membrane as a helical segment. Residues 165-184 (ERYLAICHPFKAKTLMSRSR) are Cytoplasmic-facing. A helical membrane pass occupies residues 185 to 205 (TKKFISAIWLASALLAVPMLF). Over 206-234 (TMGLQNRSADGQHPGGLVCTPTVDTATVK) the chain is Extracellular. N-linked (GlcNAc...) asparagine glycosylation is present at asparagine 211. A helical membrane pass occupies residues 235-259 (VVIQVNTFMSFLFPMLIISILNTVI). The Cytoplasmic segment spans residues 260 to 308 (ANKLTVMVHQAAEQGRGVCTVGTHNSLEHSTFNMSIEPGRVQALRHGVL). A helical membrane pass occupies residues 309–330 (VLRAVVIAFVVCWLPYHVRRLM). The tract at residues 326 to 349 (VRRLMFCYISDEQWTTFLFDFYHY) is neurotensin binding. At 331–348 (FCYISDEQWTTFLFDFYH) the chain is on the extracellular side. The chain crosses the membrane as a helical span at residues 349 to 369 (YFYMLTNALFYVSSAINPILY). Residues 370–424 (NLVSANFRQVFLSTLACLCPGWRRRRKKRPTFSRKPNSMSSNHAFSTSATRETLY) are Cytoplasmic-facing. S-palmitoyl cysteine attachment occurs at residues cysteine 386 and cysteine 388. Residues 398-424 (RPTFSRKPNSMSSNHAFSTSATRETLY) form a disordered region. Residues 403 to 424 (RKPNSMSSNHAFSTSATRETLY) show a composition bias toward polar residues.

It belongs to the G-protein coupled receptor 1 family. Neurotensin receptor subfamily. NTSR1 sub-subfamily. As to quaternary structure, interacts (palmitoylated form) with GNA11. N-glycosylated. In terms of processing, palmitoylated; this is required for normal localization at membrane rafts and normal GNA11-mediated activation of down-stream signaling cascades. The palmitoylation level increases in response to neurotensin treatment.

It localises to the cell membrane. Its subcellular location is the membrane raft. In terms of biological role, G-protein coupled receptor for the tridecapeptide neurotensin (NTS). Signaling is effected via G proteins that activate a phosphatidylinositol-calcium second messenger system. Signaling leads to the activation of downstream MAP kinases and protects cells against apoptosis. The polypeptide is Neurotensin receptor type 1 (Ntsr1) (Mus musculus (Mouse)).